Here is a 340-residue protein sequence, read N- to C-terminus: N-acetyl-gamma-glutamyl-phosphate reductase (340 aa).

The active site involves Cys-146.

The protein belongs to the NAGSA dehydrogenase family. Type 1 subfamily.

The protein localises to the cytoplasm. It carries out the reaction N-acetyl-L-glutamate 5-semialdehyde + phosphate + NADP(+) = N-acetyl-L-glutamyl 5-phosphate + NADPH + H(+). It functions in the pathway amino-acid biosynthesis; L-arginine biosynthesis; N(2)-acetyl-L-ornithine from L-glutamate: step 3/4. Catalyzes the NADPH-dependent reduction of N-acetyl-5-glutamyl phosphate to yield N-acetyl-L-glutamate 5-semialdehyde. In Streptococcus thermophilus (strain CNRZ 1066), this protein is N-acetyl-gamma-glutamyl-phosphate reductase.